We begin with the raw amino-acid sequence, 232 residues long: tRNA (guanine-N(7)-)-methyltransferase (232 aa).

S-adenosyl-L-methionine is bound by residues Glu63, Glu88, Asp115, and Asp137. Asp137 is a catalytic residue. Substrate is bound by residues Lys141, Asp173, and 211–214; that span reads TRYE.

The protein belongs to the class I-like SAM-binding methyltransferase superfamily. TrmB family.

The catalysed reaction is guanosine(46) in tRNA + S-adenosyl-L-methionine = N(7)-methylguanosine(46) in tRNA + S-adenosyl-L-homocysteine. The protein operates within tRNA modification; N(7)-methylguanine-tRNA biosynthesis. Catalyzes the formation of N(7)-methylguanine at position 46 (m7G46) in tRNA. The chain is tRNA (guanine-N(7)-)-methyltransferase from Rhizobium meliloti (strain 1021) (Ensifer meliloti).